We begin with the raw amino-acid sequence, 719 residues long: MKIDSPEFFNNREISWLQFNERVLGEVTDTRNPLMERFKFLGIFSSNLDEFYMVRVGGLKDEVLAGFNKPENKQQLTPKQQLRAIATKTKELVDQQYEAFKDVTQALKAEGISFLKHDELNEMQSEYVKTFFREQVFPVLTPVAVDAYRPFPMLSSKSLNIATALEAEDGSKRNLALVQVPAVLPRFVDLPVDDEETTAVILLEDVIISFIDSLFKGYHVLSAMPFRITRNADLPFHEEGTHDLLKLIEKELKKRRWGVGIRLEIQKNAINTNLLNMLRDVLDLQDRDIYAVDGPIDLTFAFAFYSQIGVEYDHLIYQTIMPVEPPALEKSKKLFDQILQQDYLLHHPYHTFDPIVRLIVQAANDPNVLAIKQTLYRVSGDSPIIKALKTAAENGKQVTVLVELKARFDEAKNIEWAKQLEKAGAHVIYGYSDLKTHSKITLIVRLQEGRIQRFVHLGTGNYNDSTAKLYTDIGLLTAKEQIAEDATNFFNWLSGYGEQPEWNALHTSPNSMLEKFLSLIDEEIKYHKKHGNGRIVAKMNSLTEKDIIVKLYQASRAGVRIELIVRGVCCLRPQIKGVSENIRVTSVVDRYLEHSRIFYFHHNGDDLIYCSSADWMTRNMRKRIEILFPIADEEQKNYIKDCLALTMADNVKAREQDDSGNYHYVTKGKQECESQILIQLYTNGKLKAKPSFEHPLEQKWTPVERAEEKITFDPTTSKK.

Residue asparagine 47 participates in ATP binding. Residues arginine 377 and arginine 407 each coordinate Mg(2+). Histidine 437 functions as the Phosphohistidine intermediate in the catalytic mechanism. ATP is bound by residues tyrosine 470, arginine 566, and histidine 594.

The protein belongs to the polyphosphate kinase 1 (PPK1) family. Mg(2+) is required as a cofactor. In terms of processing, an intermediate of this reaction is the autophosphorylated ppk in which a phosphate is covalently linked to a histidine residue through a N-P bond.

It catalyses the reaction [phosphate](n) + ATP = [phosphate](n+1) + ADP. Functionally, catalyzes the reversible transfer of the terminal phosphate of ATP to form a long-chain polyphosphate (polyP). In Exiguobacterium sibiricum (strain DSM 17290 / CCUG 55495 / CIP 109462 / JCM 13490 / 255-15), this protein is Polyphosphate kinase.